The following is a 168-amino-acid chain: NADH dehydrogenase [ubiquinone] 1 alpha subcomplex assembly factor 2 (168 aa).

Residues 108 to 118 are compositionally biased toward basic and acidic residues; the sequence is KEKLLQEESNK. Residues 108-168 form a disordered region; sequence KEKLLQEESN…MPHGDKGHSQ (61 aa). Ser133 carries the post-translational modification Phosphoserine. Polar residues predominate over residues 144–155; the sequence is ESPTSTGKTFQP.

The protein belongs to the complex I NDUFA12 subunit family. As to quaternary structure, interacts with ARMC9.

The protein localises to the mitochondrion. Functionally, acts as a molecular chaperone for mitochondrial complex I assembly. Complex I functions in the transfer of electrons from NADH to the respiratory chain. The immediate electron acceptor for the enzyme is believed to be ubiquinone. Is involved in the initial steps of cilia formation, including removal of CP110 from the mother centrioles, docking of membrane vesicles to the mother centrioles, and establishment of the transition zone. The protein is NADH dehydrogenase [ubiquinone] 1 alpha subcomplex assembly factor 2 (NDUFAF2) of Bos taurus (Bovine).